A 549-amino-acid chain; its full sequence is Glucose-6-phosphate isomerase (549 aa).

E354 functions as the Proton donor in the catalytic mechanism. Catalysis depends on residues H385 and K513.

This sequence belongs to the GPI family.

The protein localises to the cytoplasm. It carries out the reaction alpha-D-glucose 6-phosphate = beta-D-fructose 6-phosphate. It participates in carbohydrate biosynthesis; gluconeogenesis. It functions in the pathway carbohydrate degradation; glycolysis; D-glyceraldehyde 3-phosphate and glycerone phosphate from D-glucose: step 2/4. Its function is as follows. Catalyzes the reversible isomerization of glucose-6-phosphate to fructose-6-phosphate. The chain is Glucose-6-phosphate isomerase from Nitrosococcus oceani (strain ATCC 19707 / BCRC 17464 / JCM 30415 / NCIMB 11848 / C-107).